Here is a 96-residue protein sequence, read N- to C-terminus: Small ribosomal subunit protein bS16 (96 aa).

The protein belongs to the bacterial ribosomal protein bS16 family.

The sequence is that of Small ribosomal subunit protein bS16 from Oenococcus oeni (strain ATCC BAA-331 / PSU-1).